The sequence spans 72 residues: MSYQQQQCKQPCQPPPVCPTPKCPEPCPPPKCPEPCPSPKCPQPCPPQQCQQKYPPVTPSPPCQPKCPPKSK.

Low complexity predominate over residues 1–11; it reads MSYQQQQCKQP. Residues 1–20 form a disordered region; the sequence is MSYQQQQCKQPCQPPPVCPT. 3 tandem repeats follow at residues 21-29, 30-38, and 39-47. The tract at residues 21–47 is 3 X 9 AA tandem repeats of P-K-C-P-[EQ]-P-C-P-[PS]; it reads PKCPEPCPPPKCPEPCPSPKCPQPCPP. Pro residues-rich tracts occupy residues 33–47 and 56–72; these read PEPC…PCPP and PVTP…PKSK. Residues 33–72 form a disordered region; that stretch reads PEPCPSPKCPQPCPPQQCQQKYPPVTPSPPCQPKCPPKSK.

Belongs to the cornifin (SPRR) family.

Its subcellular location is the cytoplasm. In terms of biological role, cross-linked envelope protein of keratinocytes. It is a keratinocyte protein that first appears in the cell cytosol, but ultimately becomes cross-linked to membrane proteins by transglutaminase. All that results in the formation of an insoluble envelope beneath the plasma membrane. The protein is Small proline-rich protein 2D (SPRR2D) of Homo sapiens (Human).